A 203-amino-acid chain; its full sequence is Glycerol-3-phosphate acyltransferase (203 aa).

The next 4 helical transmembrane spans lie at 3–23 (LASALVLGAYLLGSVSTAILV), 75–95 (LGLEPVWIAAVALAAFLGHLF), 113–133 (VILGIQAWVGLAALATWLIVA), and 156–176 (LLTGERWYVAAGVLLAALIYW).

The protein belongs to the PlsY family. In terms of assembly, probably interacts with PlsX.

It localises to the cell inner membrane. It carries out the reaction an acyl phosphate + sn-glycerol 3-phosphate = a 1-acyl-sn-glycero-3-phosphate + phosphate. It functions in the pathway lipid metabolism; phospholipid metabolism. In terms of biological role, catalyzes the transfer of an acyl group from acyl-phosphate (acyl-PO(4)) to glycerol-3-phosphate (G3P) to form lysophosphatidic acid (LPA). This enzyme utilizes acyl-phosphate as fatty acyl donor, but not acyl-CoA or acyl-ACP. The polypeptide is Glycerol-3-phosphate acyltransferase (Thioalkalivibrio sulfidiphilus (strain HL-EbGR7)).